Here is a 2690-residue protein sequence, read N- to C-terminus: Non-reducing polyketide synthase pigA (2690 aa).

One can recognise a Starter acyltransferase (SAT) domain in the interval 96–211 (NILLSPLVVI…AELSRVLQDF (116 aa)). C140 acts as the Nucleophile; for transacylase activity in catalysis. H258 (proton donor/acceptor; for transacylase activity) is an active-site residue. The region spanning 388 to 804 (ENDIAVIGMS…GSNASLIVTQ (417 aa)) is the Ketosynthase family 3 (KS3) domain. Active-site for beta-ketoacyl synthase activity residues include C553, H688, and H727. In terms of domain architecture, Malonyl-CoA:ACP transacylase (MAT) spans 915 to 1182 (FGGQISTFVG…VQRLAKQHPS (268 aa)). The N-terminal hotdog fold stretch occupies residues 1296–1426 (LTFVGYQDKD…GKVFFRSVDD (131 aa)). In terms of domain architecture, PKS/mFAS DH spans 1296–1602 (LTFVGYQDKD…YAKVPKMSMS (307 aa)). The interval 1323–1600 (LVSGHLIAQT…INYAKVPKMS (278 aa)) is product template (PT) domain. H1327 serves as the catalytic Proton acceptor; for dehydratase activity. The segment at 1454–1602 (ADDIIQGRNI…YAKVPKMSMS (149 aa)) is C-terminal hotdog fold. Catalysis depends on D1510, which acts as the Proton donor; for dehydratase activity. The region spanning 1657–1731 (PDISGKVRAM…GLLRCIQEAL (75 aa)) is the Carrier 1 domain. S1691 bears the O-(pantetheine 4'-phosphoryl)serine mark. The interval 1731-1764 (LGPSEGVEEETDNEEGEDGESSENPSVFTPSDAA) is disordered. Residues 1736 to 1751 (GVEEETDNEEGEDGES) show a composition bias toward acidic residues. Positions 1755-1764 (PSVFTPSDAA) are enriched in polar residues. Residues 1768–1842 (SSAKADVAEF…EFDVKVNGKS (75 aa)) form the Carrier 2 domain. At S1802 the chain carries O-(pantetheine 4'-phosphoryl)serine. Residues 1948-2255 (QTLERIKYLP…EVNIQRIFLA (308 aa)) are methyltransferase domain. A Thioester reductase (TE) domain is found at 2320–2564 (VTGATGSLGS…LSWTPVNDVA (245 aa)).

The cofactor is pantetheine 4'-phosphate.

It functions in the pathway secondary metabolite biosynthesis. Non-reducing polyketide synthase; part of the gene cluster that mediates the biosynthesis of azaphilone pigments (MonAzPs), a complex mixture of compounds with a common azaphilone skeleton very widely used as food colorants. PigA catalyzes the first step of MonAzPs biosynthesis and forms the hexaketide precursor from successive condensations of five malonyl-CoA units, with a simple acetyl-CoA starter unit. The starter acyl transferase (SAT) domain of pigA selects an acetyl-CoA starter unit, and the ketoacyl synthase (KS)-acyl transferase (AT)-acyl carrier protein (ACP) domains extend this starter unit five times with malonyl-CoA in five successive decarboxylative Claisen condensation cycles. The methyltransferase (MT) domain conducts a single C-methylation at C-4, most likely at the pentaketide stage. The reactive hexaketide chain then undergoes a product template (PT) domain-mediated C-2 to C-7 aldol cyclization to afford the first aromatic ring, followed by reductive release of the first pathway intermediate by the NADPH-dependent reductive release (R) domain. The role of esterase pigG is not clear, but it may play at most a supplementary role in the formation of the benzaldehyde produced by the pigA nrPKS. This very reactive benzaldehyde is intercepted by the pigC ketoreductase that to provide the first stable enzyme-free MonAzPs intermediate, 6-(4-hydroxy-2-oxopentyl)-3-methyl-2,4-dioxocyclohexane carbaldehyde, also known as M7PKS-1. The FAD-dependent monooxygenase pigN hydroxylates M7PKS-1 at C-4, which triggers the formation of the pyran ring. PigJ, pigK and pigD are involved in the acetylation of the pyran ring. PigJ and pigK form the two subunits of a dedicated fungal FAS that produces the side chain fatty acyl moiety of MonAzPs and pigD transfers the fatty acyl chain to the C-4 alcohol. PigM and pigO are involved in the elimination of the omega-1 alcohol. PigM acts as an O-acetyltransferase that synthesizes the putative O-11 acetyl intermediate whereas pigO eliminates acetic acid to yield an intermediate with a C10(11) double bond. The dehydration of the C-11 alcohol followed by the reduction of the C6(7) double bond by the NAD(P)H-dependent oxidoreductase pigE increases the electrophilicity of the C-5 ketone of the resulting acyl benzopyran. This in turn sets up the C-5 ketone for an intramolecular Knoevenagel aldol condensation with the C-20 enol of the side chain. This condensation affords the characteristic linear tricyclic carbon skeletons of the yellow pigments that serve as the common precursors for the classical yellow pigments monascin and ankaflavin, orange pigments rubopunctatin and monascorubrin, and red pigments ribropunctamine and monascorubramine. The FAD-dependent oxidoreductase pigF is especially invoved in the biosynthesis of orange and red pigments via desaturation of C6(7). In Monascus ruber (Mold), this protein is Non-reducing polyketide synthase pigA.